We begin with the raw amino-acid sequence, 1414 residues long: DNA-directed RNA polymerase subunit beta' (1414 aa).

Positions 70, 72, 85, and 88 each coordinate Zn(2+). The Mg(2+) site is built by aspartate 460, aspartate 462, and aspartate 464. Zn(2+) is bound by residues cysteine 819, cysteine 893, cysteine 900, and cysteine 903. Residues 1391–1414 are disordered; sequence AEEAFDFGTPSAPAEEPQQHPAAE. Low complexity predominate over residues 1400–1414; it reads PSAPAEEPQQHPAAE.

Belongs to the RNA polymerase beta' chain family. The RNAP catalytic core consists of 2 alpha, 1 beta, 1 beta' and 1 omega subunit. When a sigma factor is associated with the core the holoenzyme is formed, which can initiate transcription. The cofactor is Mg(2+). Zn(2+) serves as cofactor.

It carries out the reaction RNA(n) + a ribonucleoside 5'-triphosphate = RNA(n+1) + diphosphate. Functionally, DNA-dependent RNA polymerase catalyzes the transcription of DNA into RNA using the four ribonucleoside triphosphates as substrates. In Burkholderia lata (strain ATCC 17760 / DSM 23089 / LMG 22485 / NCIMB 9086 / R18194 / 383), this protein is DNA-directed RNA polymerase subunit beta'.